The sequence spans 686 residues: U3 small nucleolar RNA-associated protein 4 homolog (686 aa).

WD repeat units lie at residues 7–50 (HRVR…ANYF), 51–92 (QEKF…QALN), 93–135 (IKYA…PDKI), 136–181 (QFER…AVHK), 182–226 (MIVD…SATG), 227–275 (TLVK…SSEK), 276–317 (QWVR…LMEK), 318–377 (VEVK…PLSK), 378–427 (NADH…NISL), 428–475 (KRVS…KHLH), 476–516 (AFQP…VKQL), 517–566 (KLHC…WSRT), 567–627 (VQKQ…FPPT), and 628–666 (NESDVIRRRTAHAFKISKIYKPLLFMDLLDERTLVAVER). Residue lysine 321 forms a Glycyl lysine isopeptide (Lys-Gly) (interchain with G-Cter in SUMO2) linkage.

As to quaternary structure, interacts with HIVEP1 Interacts with NOL11. Part of the small subunit (SSU) processome, composed of more than 70 proteins and the RNA chaperone small nucleolar RNA (snoRNA) U3. May be a component of the proposed t-UTP subcomplex of the ribosomal small subunit (SSU) processome containing at least UTP4, WDR43, HEATR1, UTP15, WDR75. In terms of processing, may be phosphorylated during mitosis; may control the association of this protein with WRD43 and UTP15.

The protein resides in the nucleus. It is found in the nucleolus. It localises to the chromosome. In terms of biological role, ribosome biogenesis factor. Involved in nucleolar processing of pre-18S ribosomal RNA. Part of the small subunit (SSU) processome, first precursor of the small eukaryotic ribosomal subunit. During the assembly of the SSU processome in the nucleolus, many ribosome biogenesis factors, an RNA chaperone and ribosomal proteins associate with the nascent pre-rRNA and work in concert to generate RNA folding, modifications, rearrangements and cleavage as well as targeted d Involved in SSU pre-rRNA processing at sites A', A0, 1 and 2b. Required for optimal pre-ribosomal RNA transcription by RNA polymerase. May be a transcriptional regulator. Its function is as follows. (Microbial infection) Acts as a positive regulator of HIVEP1 which specifically binds to the DNA sequence 5'-GGGACTTTCC-3' found in enhancer elements of numerous viral promoters such as those of HIV-1, SV40, or CMV. This is U3 small nucleolar RNA-associated protein 4 homolog from Homo sapiens (Human).